Consider the following 131-residue polypeptide: Translation initiation factor 5A (131 aa).

Lys-36 carries the hypusine modification.

It belongs to the eIF-5A family.

It is found in the cytoplasm. Its function is as follows. Functions by promoting the formation of the first peptide bond. In Metallosphaera sedula (strain ATCC 51363 / DSM 5348 / JCM 9185 / NBRC 15509 / TH2), this protein is Translation initiation factor 5A (eIF5A).